Here is a 587-residue protein sequence, read N- to C-terminus: Protein IQ-DOMAIN 31 (587 aa).

Residues 57-80 (ETNTVDRSGGMLETQNVGPEEISD) are disordered. Ser-79 is modified (phosphoserine). IQ domains follow at residues 112-140 (REIA…GIIR), 141-163 (LQAL…SVMG), and 164-188 (IVRL…VYRK). The segment at 149 to 159 (LVRRQAVATLF) is calmodulin-binding. Positions 176-183 (IRKSDIGV) match the Nuclear localization signal motif. Residues 344 to 587 (NPVVESSIQP…AKTTPAERKR (244 aa)) form a disordered region. Basic and acidic residues-rich tracts occupy residues 357–373 (PRKE…KTRE) and 390–413 (CDEK…EMEV). Residues 424 to 434 (ALDSSLVNQID) show a composition bias toward polar residues. Composition is skewed to basic and acidic residues over residues 435–472 (SNEK…ENQK) and 482–494 (KTER…HHET). Composition is skewed to polar residues over residues 495 to 506 (SPSIPSYMQATK) and 544 to 561 (RITS…SGDK).

Belongs to the IQD family. Binds to multiple calmodulin (CaM) in the presence of Ca(2+) and CaM-like proteins.

Its subcellular location is the nucleus. The protein localises to the nucleus envelope. The protein resides in the cytoplasm. It is found in the cytoskeleton. It localises to the cell membrane. May be involved in cooperative interactions with calmodulins or calmodulin-like proteins. Recruits calmodulin proteins to microtubules, thus being a potential scaffold in cellular signaling and trafficking. May associate with nucleic acids and regulate gene expression at the transcriptional or post-transcriptional level. This Arabidopsis thaliana (Mouse-ear cress) protein is Protein IQ-DOMAIN 31.